The sequence spans 554 residues: HMG box-containing protein 4 (554 aa).

2 disordered regions span residues 15-368 (GTED…AYQV) and 417-469 (HKQN…PAKV). Residues 75–88 (SSDDYHADHSTDSA) are compositionally biased toward basic and acidic residues. Residues 95–105 (SLPSPSSSDTA) are compositionally biased toward low complexity. The span at 113 to 123 (TSPQADTSTTH) shows a compositional bias: polar residues. 2 stretches are compositionally biased toward basic and acidic residues: residues 145–154 (PHKDYHKKSG) and 217–226 (LGREEIESRS). Polar residues predominate over residues 236-251 (YTPRSGGTPDSASSTG). Residues 268 to 296 (MKKKKKSKKSKKKKDKHKDEKHKKHSKSK) are compositionally biased toward basic residues. Over residues 313–332 (LPSPPPPPATTPPTSPPSIP) the composition is skewed to pro residues. A compositionally biased stretch (basic and acidic residues) spans 341-357 (HTEEQSDKKKKKEDPEK). Positions 359-427 (KKKNMSAYQV…KQNKAEATTV (69 aa)) form a DNA-binding region, HMG box. Low complexity-rich tracts occupy residues 433-445 (SSESAPKSKGSSS) and 454-467 (SPTSSVASFSTSPA).

As to quaternary structure, interacts with nlk.2.

The protein resides in the nucleus. Its function is as follows. Negatively regulates Wnt/beta-catenin signaling during development. The sequence is that of HMG box-containing protein 4 (hmgxb4) from Xenopus laevis (African clawed frog).